The chain runs to 120 residues: MFSLTQKIGFNAEKTACRYLQKQGLSFITKNFRYKQGEIDLIMSDQSMLVFIEVRYRRFSDFIHPVATVTPLKQRRLIKTALHYLQKHRLLDKISCRFDIVGITADRQITWIKNAIEVEY.

It belongs to the UPF0102 family.

In Coxiella burnetii (strain RSA 331 / Henzerling II), this protein is UPF0102 protein COXBURSA331_A1934.